A 113-amino-acid polypeptide reads, in one-letter code: Parvalbumin beta (113 aa).

A1 carries the N-acetylalanine modification. C18 is a glycosylation site (S-linked (Glc) cysteine). 2 consecutive EF-hand domains span residues 38 to 73 (FSADELKKLFKIADEDKEGFIEEDELKLFLIAFAAD) and 77 to 112 (LTDAETKAFLKAGDSDGDGKIGVDEFGALVDKWGAK). The Ca(2+) site is built by D51, D53, E55, F57, E59, E62, D90, D92, D94, K96, and E101.

It belongs to the parvalbumin family. As to expression, muscle (at protein level).

Functionally, in muscle, parvalbumin is thought to be involved in relaxation after contraction. It binds two calcium ions. In Gadus morhua subsp. callarias (Baltic cod), this protein is Parvalbumin beta.